A 192-amino-acid chain; its full sequence is NF-kappa-B inhibitor-interacting Ras-like protein 1 (192 aa).

Residue glycine 11 to threonine 18 participates in GTP binding. Residues aspartate 35–tyrosine 43 carry the Effector region motif. Positions histidine 58 to serine 93 are interactions with NFKBIA and NFKBIB. GTP-binding positions include aspartate 61 to leucine 65 and asparagine 120 to aspartate 123. The segment at leucine 168–asparagine 192 is disordered.

Belongs to the small GTPase superfamily. Ras family. KappaB-Ras subfamily. Interacts with both NF-kappa-B inhibitor alpha (NFKBIA) and beta (NFKBIB) in vitro. However, it probably only interacts with NFKBIB in vivo. Forms a complex with NFKBIB and NF-kappa-B heterodimer (p50/NFKB1 and p65/RELA). Also interacts with c-Rel (REL).

Its subcellular location is the cytoplasm. Atypical Ras-like protein that acts as a potent regulator of NF-kappa-B activity by preventing the degradation of NF-kappa-B inhibitor beta (NFKBIB) by most signals, explaining why NFKBIB is more resistant to degradation. May act by blocking phosphorylation of NFKBIB and mediating cytoplasmic retention of p65/RELA NF-kappa-B subunit. It is unclear whether it acts as a GTPase. Both GTP- and GDP-bound forms block phosphorylation of NFKBIB. The protein is NF-kappa-B inhibitor-interacting Ras-like protein 1 (Nkiras1) of Mus musculus (Mouse).